Here is a 341-residue protein sequence, read N- to C-terminus: S-adenosylmethionine:tRNA ribosyltransferase-isomerase (341 aa).

Belongs to the QueA family. In terms of assembly, monomer.

It localises to the cytoplasm. The catalysed reaction is 7-aminomethyl-7-carbaguanosine(34) in tRNA + S-adenosyl-L-methionine = epoxyqueuosine(34) in tRNA + adenine + L-methionine + 2 H(+). The protein operates within tRNA modification; tRNA-queuosine biosynthesis. Transfers and isomerizes the ribose moiety from AdoMet to the 7-aminomethyl group of 7-deazaguanine (preQ1-tRNA) to give epoxyqueuosine (oQ-tRNA). This chain is S-adenosylmethionine:tRNA ribosyltransferase-isomerase, found in Clostridium perfringens (strain ATCC 13124 / DSM 756 / JCM 1290 / NCIMB 6125 / NCTC 8237 / Type A).